Reading from the N-terminus, the 318-residue chain is Decaprenyl-phosphate phosphoribosyltransferase (318 aa).

Transmembrane regions (helical) follow at residues 33-53 (WIKN…GIEY) and 59-79 (AAKV…IYLI). The 5-phospho-alpha-D-ribose 1-diphosphate site is built by Lys-35 and Tyr-77. Residues Asn-80 and Asp-84 each contribute to the Mg(2+) site. Residue Lys-94 coordinates 5-phospho-alpha-D-ribose 1-diphosphate. Helical transmembrane passes span 99–119 (IAAG…LAVA) and 121–141 (LVIS…YIAV). Residues Lys-150 and Arg-167 each coordinate 5-phospho-alpha-D-ribose 1-diphosphate. The next 2 membrane-spanning stretches (helical) occupy residues 153-173 (AVLD…AGGV) and 177-197 (IPLS…MAAG). Lys-198 contributes to the trans,octa-cis-decaprenyl phosphate binding site. Helical transmembrane passes span 225-245 (LRFV…LWAF), 262-282 (SWYA…AVDI), and 298-318 (RVLQ…IYFS).

This sequence belongs to the UbiA prenyltransferase family. DPPR synthase subfamily. Mg(2+) is required as a cofactor.

Its subcellular location is the cell inner membrane. The enzyme catalyses trans,octa-cis-decaprenyl phosphate + 5-phospho-alpha-D-ribose 1-diphosphate + H(+) = trans,octa-cis-decaprenylphospho-beta-D-ribofuranose 5-phosphate + diphosphate. It functions in the pathway cell wall biogenesis; cell wall polysaccharide biosynthesis. Functionally, involved in the biosynthesis of decaprenylphosphoryl arabinose (DPA) a precursor for arabinan synthesis in mycobacterial cell wall biosynthesis. Catalyzes the transfer of a 5-phosphoribosyl residue from phosphoribose diphosphate (PRPP) to decaprenyl phosphate (DP) to form decaprenylphosphoryl-5-phosphoribose (DPPR). This chain is Decaprenyl-phosphate phosphoribosyltransferase, found in Mycolicibacterium smegmatis (strain ATCC 700084 / mc(2)155) (Mycobacterium smegmatis).